Consider the following 427-residue polypeptide: Proline--tRNA ligase (427 aa).

It belongs to the class-II aminoacyl-tRNA synthetase family. ProS type 2 subfamily. As to quaternary structure, homodimer.

The protein resides in the cytoplasm. The enzyme catalyses tRNA(Pro) + L-proline + ATP = L-prolyl-tRNA(Pro) + AMP + diphosphate. Catalyzes the attachment of proline to tRNA(Pro) in a two-step reaction: proline is first activated by ATP to form Pro-AMP and then transferred to the acceptor end of tRNA(Pro). This chain is Proline--tRNA ligase, found in Rickettsia akari (strain Hartford).